A 144-amino-acid polypeptide reads, in one-letter code: Deoxyuridine 5'-triphosphate nucleotidohydrolase (144 aa).

Residues 63 to 65, asparagine 76, and 80 to 82 each bind substrate; these read RSG and TID.

Belongs to the dUTPase family. Requires Mg(2+) as cofactor.

The catalysed reaction is dUTP + H2O = dUMP + diphosphate + H(+). It functions in the pathway pyrimidine metabolism; dUMP biosynthesis; dUMP from dCTP (dUTP route): step 2/2. In terms of biological role, this enzyme is involved in nucleotide metabolism: it produces dUMP, the immediate precursor of thymidine nucleotides and it decreases the intracellular concentration of dUTP so that uracil cannot be incorporated into DNA. The chain is Deoxyuridine 5'-triphosphate nucleotidohydrolase from Porphyromonas gingivalis (strain ATCC 33277 / DSM 20709 / CIP 103683 / JCM 12257 / NCTC 11834 / 2561).